The sequence spans 153 residues: Putative pre-16S rRNA nuclease (153 aa).

This sequence belongs to the YqgF nuclease family.

Its subcellular location is the cytoplasm. In terms of biological role, could be a nuclease involved in processing of the 5'-end of pre-16S rRNA. The polypeptide is Putative pre-16S rRNA nuclease (Prochlorococcus marinus (strain AS9601)).